The primary structure comprises 131 residues: Fluoride-specific ion channel FluC 2 (131 aa).

Helical transmembrane passes span 5 to 25, 35 to 55, 59 to 79, and 95 to 115; these read SAVF…NLWI, WLEN…FMIG, PLLS…MSTF, and LLYV…GVFV. The Na(+) site is built by Gly-71 and Thr-74.

The protein belongs to the fluoride channel Fluc/FEX (TC 1.A.43) family.

It localises to the cell membrane. It carries out the reaction fluoride(in) = fluoride(out). With respect to regulation, na(+) is not transported, but it plays an essential structural role and its presence is essential for fluoride channel function. In terms of biological role, fluoride-specific ion channel. Important for reducing fluoride concentration in the cell, thus reducing its toxicity. The chain is Fluoride-specific ion channel FluC 2 from Bacillus subtilis (strain 168).